The primary structure comprises 591 residues: Aspartate--tRNA(Asp/Asn) ligase (591 aa).

Glutamate 175 is a binding site for L-aspartate. Positions 199–202 (QQFK) are aspartate. Residues arginine 221 and histidine 453 each coordinate L-aspartate. 221–223 (RDE) is an ATP binding site. Glutamate 486 serves as a coordination point for ATP. Residue arginine 493 coordinates L-aspartate. Residue 538-541 (GIDR) coordinates ATP.

Belongs to the class-II aminoacyl-tRNA synthetase family. Type 1 subfamily. As to quaternary structure, homodimer.

The protein resides in the cytoplasm. It carries out the reaction tRNA(Asx) + L-aspartate + ATP = L-aspartyl-tRNA(Asx) + AMP + diphosphate. Functionally, aspartyl-tRNA synthetase with relaxed tRNA specificity since it is able to aspartylate not only its cognate tRNA(Asp) but also tRNA(Asn). Reaction proceeds in two steps: L-aspartate is first activated by ATP to form Asp-AMP and then transferred to the acceptor end of tRNA(Asp/Asn). The polypeptide is Aspartate--tRNA(Asp/Asn) ligase (Cereibacter sphaeroides (strain ATCC 17025 / ATH 2.4.3) (Rhodobacter sphaeroides)).